A 371-amino-acid chain; its full sequence is Surface protein P12p (371 aa).

The signal sequence occupies residues 1–20; the sequence is MHIVSFIIFFFALFFPISIC. 6-Cys domains lie at 23 to 168 and 169 to 343; these read INGV…LKKN and ILYG…FSNQ. Cystine bridges form between Cys27-Cys62, Cys76-Cys144, Cys93-Cys142, and Cys173-Cys245. A glycan (N-linked (GlcNAc...) asparagine) is linked at Asn184. The disordered stretch occupies residues 202–239; that stretch reads GNNNNDDDNNDDDNNNDNNNNDNNNNNNNNNNNNNNNN. Residues 206-216 are compositionally biased toward acidic residues; the sequence is NDDDNNDDDNN. The segment covering 217–239 has biased composition (low complexity); the sequence is NDNNNNDNNNNNNNNNNNNNNNN. Residues Asn242 and Asn246 are each glycosylated (N-linked (GlcNAc...) asparagine). 2 disulfide bridges follow: Cys260–Cys323 and Cys271–Cys321.

It is found in the cell surface. Its subcellular location is the cell membrane. This chain is Surface protein P12p (PFS12P), found in Plasmodium falciparum (isolate 3D7).